A 61-amino-acid polypeptide reads, in one-letter code: MAKTALIQKANSKPKFGVRAYTRCNRCGRPRSVYRKFGLCRICLREMALAGQLPGVTKSSW.

Residues cysteine 24, cysteine 27, cysteine 40, and cysteine 43 each coordinate Zn(2+).

It belongs to the universal ribosomal protein uS14 family. Zinc-binding uS14 subfamily. As to quaternary structure, part of the 30S ribosomal subunit. Contacts proteins S3 and S10. The cofactor is Zn(2+).

In terms of biological role, binds 16S rRNA, required for the assembly of 30S particles and may also be responsible for determining the conformation of the 16S rRNA at the A site. The polypeptide is Small ribosomal subunit protein uS14 (Beutenbergia cavernae (strain ATCC BAA-8 / DSM 12333 / CCUG 43141 / JCM 11478 / NBRC 16432 / NCIMB 13614 / HKI 0122)).